Consider the following 418-residue polypeptide: UDP-N-acetylglucosamine 1-carboxyvinyltransferase (418 aa).

23–24 contributes to the phosphoenolpyruvate binding site; sequence KN. A UDP-N-acetyl-alpha-D-glucosamine-binding site is contributed by Arg93. Asp117 functions as the Proton donor in the catalytic mechanism. UDP-N-acetyl-alpha-D-glucosamine contacts are provided by Asp305 and Val327.

This sequence belongs to the EPSP synthase family. MurA subfamily.

The protein resides in the cytoplasm. The catalysed reaction is phosphoenolpyruvate + UDP-N-acetyl-alpha-D-glucosamine = UDP-N-acetyl-3-O-(1-carboxyvinyl)-alpha-D-glucosamine + phosphate. Its pathway is cell wall biogenesis; peptidoglycan biosynthesis. In terms of biological role, cell wall formation. Adds enolpyruvyl to UDP-N-acetylglucosamine. The polypeptide is UDP-N-acetylglucosamine 1-carboxyvinyltransferase (Mycobacterium bovis (strain ATCC BAA-935 / AF2122/97)).